Here is a 257-residue protein sequence, read N- to C-terminus: uncharacterized protein (257 aa).

7 to 14 (GKGGVGKT) contributes to the ATP binding site.

To M.jannaschii MJ0084 and MJ0685.

This is an uncharacterized protein from Methanocaldococcus jannaschii (strain ATCC 43067 / DSM 2661 / JAL-1 / JCM 10045 / NBRC 100440) (Methanococcus jannaschii).